The following is a 159-amino-acid chain: Large ribosomal subunit protein eL24 (159 aa).

The tract at residues 118 to 159 (ANKAVRAAKAAANKEKKASQPKTQQKTAKNVKTAAPRVGGKR) is disordered. Over residues 137-147 (QPKTQQKTAKN) the composition is skewed to polar residues.

The protein belongs to the eukaryotic ribosomal protein eL24 family.

This chain is Large ribosomal subunit protein eL24, found in Caenorhabditis elegans.